The primary structure comprises 715 residues: Putative membrane protein IgaA homolog (715 aa).

5 helical membrane-spanning segments follow: residues 2–22 (STIV…GLLW), 214–234 (EACA…GPTV), 235–255 (TLPW…WYLF), 349–369 (NLTL…YVPL), and 663–683 (ATSL…VLLI).

It belongs to the IgaA family.

The protein localises to the cell inner membrane. In Yersinia pestis, this protein is Putative membrane protein IgaA homolog.